Here is a 167-residue protein sequence, read N- to C-terminus: Transcription antitermination protein NusB (167 aa).

It belongs to the NusB family.

Involved in transcription antitermination. Required for transcription of ribosomal RNA (rRNA) genes. Binds specifically to the boxA antiterminator sequence of the ribosomal RNA (rrn) operons. The sequence is that of Transcription antitermination protein NusB from Nitrosomonas europaea (strain ATCC 19718 / CIP 103999 / KCTC 2705 / NBRC 14298).